A 95-amino-acid polypeptide reads, in one-letter code: Large ribosomal subunit protein bL25 (95 aa).

Belongs to the bacterial ribosomal protein bL25 family. In terms of assembly, part of the 50S ribosomal subunit; part of the 5S rRNA/L5/L18/L25 subcomplex. Contacts the 5S rRNA. Binds to the 5S rRNA independently of L5 and L18.

This is one of the proteins that binds to the 5S RNA in the ribosome where it forms part of the central protuberance. The chain is Large ribosomal subunit protein bL25 from Yersinia enterocolitica serotype O:8 / biotype 1B (strain NCTC 13174 / 8081).